The chain runs to 239 residues: Cell number regulator 6 (239 aa).

A compositionally biased stretch (polar residues) spans 1 to 10 (MAEDATSSHP). Residues 1–33 (MAEDATSSHPSRYVKLTKDQDAPAEDIRPGELN) form a disordered region. Over residues 16-29 (LTKDQDAPAEDIRP) the composition is skewed to basic and acidic residues. 2 helical membrane-spanning segments follow: residues 107 to 127 (CVCH…TAIF) and 136 to 156 (FLIG…TGIF).

Belongs to the cornifelin family. Expressed in roots, leaves, stalks, apical meristems, immature ears, endosperm, pericarp and tassel spikelets.

It localises to the membrane. The protein is Cell number regulator 6 (CNR6) of Zea mays (Maize).